The chain runs to 196 residues: Large ribosomal subunit protein bL9 (196 aa).

The protein belongs to the bacterial ribosomal protein bL9 family.

In terms of biological role, binds to the 23S rRNA. The protein is Large ribosomal subunit protein bL9 of Gluconobacter oxydans (strain 621H) (Gluconobacter suboxydans).